The following is a 1333-amino-acid chain: Inner capsid protein VP1 (1333 aa).

Over residues 1-10 (MHSTNNNSNK) the composition is skewed to low complexity. The interval 1-71 (MHSTNNNSNK…QTDGTGLSGT (71 aa)) is disordered. Residues 11 to 21 (RNNEEKHKQPE) are compositionally biased toward basic and acidic residues. Positions 22–42 (IDSSANNGEGTSGTRAQTVGD) are enriched in polar residues.

It belongs to the turreted BTV-fold inner capsid family. In terms of assembly, homodecamer; each decamer is made up of two conformers of VP2, called VP2A and VP2B. 12 homodecamers assemble to form an icosahedral capsid.

It is found in the virion. In terms of biological role, inner capsid protein that self-assembles to form an icosahedral capsid with a T=2 symmetry, which consists of 120 copies of VP2, with channels at each of its five-fold vertices. This capsid constitutes the innermost concentric layer of the viral mature particle. In Bombyx mori (Silk moth), this protein is Inner capsid protein VP1.